Here is a 207-residue protein sequence, read N- to C-terminus: Outer-membrane lipoprotein LolB (207 aa).

The signal sequence occupies residues 1 to 21 (MPLPDFRLIRLLPLAALVLTA). A lipid anchor (N-palmitoyl cysteine) is attached at cysteine 22. Cysteine 22 carries the S-diacylglycerol cysteine lipid modification.

This sequence belongs to the LolB family. In terms of assembly, monomer.

The protein localises to the cell outer membrane. Its function is as follows. Plays a critical role in the incorporation of lipoproteins in the outer membrane after they are released by the LolA protein. The protein is Outer-membrane lipoprotein LolB of Escherichia coli (strain SMS-3-5 / SECEC).